The following is a 465-amino-acid chain: MNFDSSPIAAIATAPGRGGIGVVRVSGKNISSIIEAVCATKGAELQPRHATFTNFVNADGSVIDQGLAIYFKAPHSYTGEDVLELQGHGGPIVLQMLLTRCLEAGTDIGLRMAQPGEFTHRAFLNDKLDLAQAEGVIDLIEASTEAAAKSASQSLSGAFSKTIQDLVDKITNLRMLVEATLDFPEEEIDFLEKSDARGQLNGIREALQAVFTQASQGALLRDGLNIVLAGQPNVGKSSLLNALAGSDVAIVTAIAGTTRDKVIETIQIEGIPVNVIDTAGIRDASDATDEVERIGIERTWAAVKTADVIIHMLDANRGPTRADEQIVERFPENIPVMRIWNKIDLSGHRPAIDRMPDSTHIYVSATDLQGMDLLRGELLRLIGWQQTGESLYLARERHLVALKSAHDHLEMAAQHAAHDSEATDPALDLFAEELRLAQERLSSITGEFTSDDLLGVIFSRFCIGK.

Positions 24, 84, and 127 each coordinate (6S)-5-formyl-5,6,7,8-tetrahydrofolate. The region spanning 223–383 is the TrmE-type G domain; sequence GLNIVLAGQP…LRGELLRLIG (161 aa). N233 contributes to the K(+) binding site. GTP contacts are provided by residues 233 to 238, 252 to 258, and 277 to 280; these read NVGKSS, TAIAGTT, and DTAG. Residue S237 participates in Mg(2+) binding. Residues T252, I254, and T257 each contribute to the K(+) site. Residue T258 coordinates Mg(2+). K465 is a (6S)-5-formyl-5,6,7,8-tetrahydrofolate binding site.

The protein belongs to the TRAFAC class TrmE-Era-EngA-EngB-Septin-like GTPase superfamily. TrmE GTPase family. In terms of assembly, homodimer. Heterotetramer of two MnmE and two MnmG subunits. The cofactor is K(+).

It localises to the cytoplasm. Its function is as follows. Exhibits a very high intrinsic GTPase hydrolysis rate. Involved in the addition of a carboxymethylaminomethyl (cmnm) group at the wobble position (U34) of certain tRNAs, forming tRNA-cmnm(5)s(2)U34. The polypeptide is tRNA modification GTPase MnmE (Janthinobacterium sp. (strain Marseille) (Minibacterium massiliensis)).